The chain runs to 585 residues: Protein DENND6B (585 aa).

A uDENN domain is found at 43–214 (ECVCVVTFDL…LPVMGVVVQV (172 aa)). The cDENN domain maps to 246–373 (VHELDLFRCF…VKLKKPSRLK (128 aa)). Residues 375-499 (LDTKPGLYTA…KSPHFDGWYR (125 aa)) enclose the dDENN domain.

Belongs to the DENND6 family.

The protein resides in the recycling endosome. The protein localises to the cytoplasm. Functionally, guanine nucleotide exchange factor (GEF) for RAB14. Also has some, lesser GEF activity towards RAB35. The sequence is that of Protein DENND6B (DENND6B) from Homo sapiens (Human).